A 198-amino-acid chain; its full sequence is Ribonuclease HII (198 aa).

Residues 14 to 198 form the RNase H type-2 domain; that stretch reads GVIAGVDEVG…KNFAPISRAL (185 aa). Residues Asp-20, Glu-21, and Asp-112 each contribute to the a divalent metal cation site.

It belongs to the RNase HII family. Requires Mn(2+) as cofactor. It depends on Mg(2+) as a cofactor.

The protein resides in the cytoplasm. It catalyses the reaction Endonucleolytic cleavage to 5'-phosphomonoester.. In terms of biological role, endonuclease that specifically degrades the RNA of RNA-DNA hybrids. The chain is Ribonuclease HII from Wolbachia pipientis wMel.